The following is a 265-amino-acid chain: Hydroxyethylthiazole kinase (265 aa).

Met-55 serves as a coordination point for substrate. ATP-binding residues include Arg-130 and Ser-176. Gly-203 provides a ligand contact to substrate.

It belongs to the Thz kinase family. It depends on Mg(2+) as a cofactor.

The enzyme catalyses 5-(2-hydroxyethyl)-4-methylthiazole + ATP = 4-methyl-5-(2-phosphooxyethyl)-thiazole + ADP + H(+). It participates in cofactor biosynthesis; thiamine diphosphate biosynthesis; 4-methyl-5-(2-phosphoethyl)-thiazole from 5-(2-hydroxyethyl)-4-methylthiazole: step 1/1. Its function is as follows. Catalyzes the phosphorylation of the hydroxyl group of 4-methyl-5-beta-hydroxyethylthiazole (THZ). The polypeptide is Hydroxyethylthiazole kinase (Leptospira interrogans serogroup Icterohaemorrhagiae serovar copenhageni (strain Fiocruz L1-130)).